The following is a 376-amino-acid chain: Heptahelical transmembrane protein ADIPOR1 (376 aa).

The Cytoplasmic segment spans residues 1–90 (MGEEAAMATM…LSLFSWHNET (90 aa)). The disordered stretch occupies residues 20–46 (PAAAPAPAKGGGSKKKRKQQKREEKRK). Residues 91 to 111 (INIWTHLLGFVLFFGLTVLHL) form a helical membrane-spanning segment. Residues 112–179 (GQYFPQVADL…AAAAATTRWP (68 aa)) are Extracellular-facing. A helical membrane pass occupies residues 180–200 (FFVFLAGAMFCLLSSAACHLL). Topologically, residues 201 to 216 (SCHSHRLNLFLIRLDY) are cytoplasmic. A helical membrane pass occupies residues 217–237 (TGIAVMIVVSFFPPIYYIFQC). Residues 238–240 (EPR) lie on the Extracellular side of the membrane. Residues 241–261 (WQVVYLSAITAAGVATVYALM) traverse the membrane as a helical segment. The Cytoplasmic portion of the chain corresponds to 262 to 274 (SPRLSAARYRAHR). The chain crosses the membrane as a helical span at residues 275-295 (ALLFVAMGLSGVVPAAHAVAV). Over 296–303 (NWHEPRRN) the chain is Extracellular. The helical transmembrane segment at 304–324 (VTLAYEGAMAASYLAGTAFYL) threads the bilayer. The Cytoplasmic portion of the chain corresponds to 325–344 (TRVPERWRPGMFDLCGHSHQ). A helical membrane pass occupies residues 345–365 (IFHALVIAGALAHYAAAIVFI). The Extracellular portion of the chain corresponds to 366 to 376 (QARDEMGCPAP).

This sequence belongs to the ADIPOR family.

The protein resides in the membrane. Its function is as follows. May play a role in abiotic stress response. In Oryza sativa subsp. japonica (Rice), this protein is Heptahelical transmembrane protein ADIPOR1 (ADIPOR1).